The primary structure comprises 450 residues: MKNSLSLDLTKTKPYVEEHEIQYLESIIREMDNTLGKKTGPGNKFLGWMDLPINYNKEEFARIKKAAEKIKNTCDVFIVIGIGGSYLGSRAAIEMISNTFYNNLDKSQRKVPQIYFAGNNISSTYMADLLELVKDKDICVNVISKSGTTTEPAIAFRIFKELLENKYGKEGAKERIFATTDAAKGALRTLADSEGYETFVIPDDVGGRFSVLTPVGLLPIAASGIDIDEMMKGAADARQEYSSDNIEKNHVYRYVAVRNALYRKGKTTEMLVNFEPCLHYFGEWWKQLYGESEGKDGKGIFPAAADFSTDLHSMGQYIQEGLRNIFETFINVENPRKSIMIKEDKENLDGLNFLAEKDMDYVNHQALRGTVLAHNDGGVPAIVLNVPELSAYYFGQLVYFFEKACGISGYLQGVNPFDQPGVEAYKKNMFALLGKPGHEDMKATLEERLK.

The active-site Proton donor is the E291. Residues H312 and K426 contribute to the active site.

This sequence belongs to the GPI family.

It is found in the cytoplasm. It catalyses the reaction alpha-D-glucose 6-phosphate = beta-D-fructose 6-phosphate. It functions in the pathway carbohydrate biosynthesis; gluconeogenesis. The protein operates within carbohydrate degradation; glycolysis; D-glyceraldehyde 3-phosphate and glycerone phosphate from D-glucose: step 2/4. Its function is as follows. Catalyzes the reversible isomerization of glucose-6-phosphate to fructose-6-phosphate. In Clostridium botulinum (strain Loch Maree / Type A3), this protein is Glucose-6-phosphate isomerase.